The sequence spans 327 residues: MAAVVEVEVGGGALAERELDEVDMSDLSPEEQWRVEHARMHAKHRGHEAMHAEMVLILIATLVVAQLLLVQWKQRHPRSYNMVTLFQMWVVPLYFTVKLHWWRFLVIWIFFSAVTAFVTFRATRKPLVQTTPRLVYKWFLLIYKISYATGIVGYMAVMFTLFGLNLLFKIKPEDAMDFGISLLFYGLYYGVLERDFAEMCADYMASTIGFYSESGMPTKHLSDSVCAVCGQQIFVDVNEEGIIENTYRLSCNHVFHEFCIRGWCIVGKKQTCPYCKEKVDLKRMFSNPWERPHVMYGQLLDWLRYLVAWQPVIIGLVQGISYILGLE.

Ala-2 carries the post-translational modification N-acetylalanine. 5 consecutive transmembrane segments (helical) span residues 50 to 70 (MHAE…LLLV), 79 to 99 (SYNM…TVKL), 100 to 120 (HWWR…FVTF), 148 to 168 (ATGI…NLLF), and 172 to 192 (PEDA…YGVL). Residues 226 to 276 (CAVCGQQIFVDVNEEGIIENTYRLSCNHVFHEFCIRGWCIVGKKQTCPYCK) form an RING-type; atypical zinc finger. Residues 306–326 (LVAWQPVIIGLVQGISYILGL) form a helical membrane-spanning segment.

This sequence belongs to the RNF121 family.

It is found in the endoplasmic reticulum membrane. It catalyses the reaction S-ubiquitinyl-[E2 ubiquitin-conjugating enzyme]-L-cysteine + [acceptor protein]-L-lysine = [E2 ubiquitin-conjugating enzyme]-L-cysteine + N(6)-ubiquitinyl-[acceptor protein]-L-lysine.. It functions in the pathway protein modification; protein ubiquitination. E3 ubiquitin ligase which accepts ubiquitin and transfers it to substrates thereby promoting their degradation by the endoplasmic reticulum-associated degradation (ERAD) pathway which is a pathway involved in ubiquitin-dependent degradation of misfolded endoplasmic reticulum proteins. May regulate the unfolded protein response to reduce endoplasmic reticulum stress. The sequence is that of E3 ubiquitin ligase Rnf121 (Rnf121) from Mus musculus (Mouse).